The primary structure comprises 147 residues: Protein-export protein SecB 2 (147 aa).

Belongs to the SecB family. In terms of assembly, homotetramer, a dimer of dimers. One homotetramer interacts with 1 SecA dimer.

The protein resides in the cytoplasm. Functionally, one of the proteins required for the normal export of preproteins out of the cell cytoplasm. It is a molecular chaperone that binds to a subset of precursor proteins, maintaining them in a translocation-competent state. It also specifically binds to its receptor SecA. This chain is Protein-export protein SecB 2, found in Francisella tularensis subsp. holarctica (strain FTNF002-00 / FTA).